We begin with the raw amino-acid sequence, 515 residues long: ATP synthase subunit alpha (515 aa).

Position 171-178 (171-178 (GDRQTGKT)) interacts with ATP.

The protein belongs to the ATPase alpha/beta chains family. F-type ATPases have 2 components, CF(1) - the catalytic core - and CF(0) - the membrane proton channel. CF(1) has five subunits: alpha(3), beta(3), gamma(1), delta(1), epsilon(1). CF(0) has three main subunits: a(1), b(2) and c(9-12). The alpha and beta chains form an alternating ring which encloses part of the gamma chain. CF(1) is attached to CF(0) by a central stalk formed by the gamma and epsilon chains, while a peripheral stalk is formed by the delta and b chains.

Its subcellular location is the cell membrane. It carries out the reaction ATP + H2O + 4 H(+)(in) = ADP + phosphate + 5 H(+)(out). Functionally, produces ATP from ADP in the presence of a proton gradient across the membrane. The alpha chain is a regulatory subunit. This is ATP synthase subunit alpha from Stenotrophomonas maltophilia (strain K279a).